Reading from the N-terminus, the 327-residue chain is Selenate reductase subunit beta (327 aa).

4Fe-4S ferredoxin-type domains lie at 6-35 (LAYVFDLNKCIGCHTCTMACKQLWTNRDGR), 124-155 (NHYFYLPRICNHCSNPACLAACPTKAIYKREE), and 157-186 (GLVVVDQSRCKGYRYCVKACPYGKMYFNLQ). Residues Cys15, Cys18, Cys21, Cys25, Cys133, Cys136, and Cys141 each coordinate [4Fe-4S] cluster. The [3Fe-4S] cluster site is built by Cys145, Cys166, and Cys172. Residues Cys176, Cys193, Cys196, Cys208, and Cys212 each coordinate [4Fe-4S] cluster.

As to quaternary structure, heterotrimer of alpha (SerA), beta (SerB) and gamma (SerC) subunits. It depends on [3Fe-4S] cluster as a cofactor. The cofactor is [4Fe-4S] cluster.

It is found in the periplasm. The catalysed reaction is selenite + 2 Fe(III)-[cytochrome c] + H2O = 2 Fe(II)-[cytochrome] + selenate + 2 H(+). Enzyme isolated from cells grown in a tungstate rich environment shows a 20-fold reduction in selenate reductase activity. In terms of biological role, component of the selenate reductase, which catalyzes the reduction of selenate to selenite and allows anaerobic growth with selenate as the sole terminal electron acceptor. A c-type di-heme cytochrome of the cytc4 family was shown to donate electrons to the selenate reductase in vitro. SerABC can also use reduced benzyl viologen or reduced methyl viologen as an electron donor. This subunit transfers electrons from SerC to SerA. The reductase is specific for selenate, and cannot reduce nitrate, nitrite, chlorate or sulfate. This chain is Selenate reductase subunit beta, found in Thauera selenatis.